Here is a 364-residue protein sequence, read N- to C-terminus: Aminomethyltransferase (364 aa).

It belongs to the GcvT family. In terms of assembly, the glycine cleavage system is composed of four proteins: P, T, L and H.

The enzyme catalyses N(6)-[(R)-S(8)-aminomethyldihydrolipoyl]-L-lysyl-[protein] + (6S)-5,6,7,8-tetrahydrofolate = N(6)-[(R)-dihydrolipoyl]-L-lysyl-[protein] + (6R)-5,10-methylene-5,6,7,8-tetrahydrofolate + NH4(+). Functionally, the glycine cleavage system catalyzes the degradation of glycine. The sequence is that of Aminomethyltransferase from Shewanella pealeana (strain ATCC 700345 / ANG-SQ1).